The chain runs to 160 residues: G-protein-signaling modulator 3 (160 aa).

A disordered region spans residues Met-1–Ala-55. Over residues Gln-7–Gly-22 the composition is skewed to acidic residues. A phosphoserine mark is found at Ser-35, Ser-39, Ser-56, and Ser-59. Residues Ser-35–Gly-44 are compositionally biased toward pro residues. A Phosphothreonine modification is found at Thr-62. 3 consecutive GoLoco domains span residues Thr-62–Phe-84, Arg-104–Pro-126, and Gly-132–Pro-155.

Expressed in heart, placenta, lung and liver.

It is found in the cytoplasm. In terms of biological role, interacts with subunit of G(i) alpha proteins and regulates the activation of G(i) alpha proteins. The chain is G-protein-signaling modulator 3 (GPSM3) from Homo sapiens (Human).